Here is a 368-residue protein sequence, read N- to C-terminus: MKTLNSTPRADGFHMPAEWAPQTQVWMVWPERPDNWRLGGKPAQAAHVTLAKAIARFEPVTVAVSAGQYENARRQLDQPNIRVVEISNDDAWVRDTGPTFVINDHGEVRGVDWGFNAWGGFDGGLYAPWNRDEELAAKVLEMERCQRYQTEGFVLEGGSIHVDGEGTVITTEECLLNRNRNPHLSREQIEAVLRDHLAVDTVVWLPDGLYNDETDGHVDNFCCYVRPGEVLLAWTDDSNDPNYARCHAAMDVLKNTRDAKGREFIVHKMPIPGPLFATAEECAGVDQVAGSQERDPSVRLAGSYVNFLIVNGGIIAPSFDDPADAEARAILARIFPDHEVVMIPGRELLLGGGNIHCLTQQQPAPVKR.

Cys357 serves as the catalytic Amidino-cysteine intermediate.

It belongs to the agmatine deiminase family. As to quaternary structure, homodimer.

The catalysed reaction is agmatine + H2O = N-carbamoylputrescine + NH4(+). The protein operates within amine and polyamine biosynthesis; putrescine biosynthesis via agmatine pathway; N-carbamoylputrescine from agmatine: step 1/1. Its function is as follows. Mediates the hydrolysis of agmatine into N-carbamoylputrescine in the arginine decarboxylase (ADC) pathway of putrescine biosynthesis, a basic polyamine. The polypeptide is Agmatine deiminase (Pseudomonas putida (strain ATCC 47054 / DSM 6125 / CFBP 8728 / NCIMB 11950 / KT2440)).